A 309-amino-acid polypeptide reads, in one-letter code: Homoserine kinase (309 aa).

95 to 105 (PQSRGLGSSAA) serves as a coordination point for ATP.

The protein belongs to the GHMP kinase family. Homoserine kinase subfamily.

Its subcellular location is the cytoplasm. It carries out the reaction L-homoserine + ATP = O-phospho-L-homoserine + ADP + H(+). It participates in amino-acid biosynthesis; L-threonine biosynthesis; L-threonine from L-aspartate: step 4/5. Catalyzes the ATP-dependent phosphorylation of L-homoserine to L-homoserine phosphate. In Corynebacterium glutamicum (strain R), this protein is Homoserine kinase.